A 114-amino-acid polypeptide reads, in one-letter code: Hydrogenase maturation factor HypA (114 aa).

A Ni(2+)-binding site is contributed by histidine 2. Zn(2+) is bound by residues cysteine 70, cysteine 73, cysteine 86, and cysteine 89.

It belongs to the HypA/HybF family.

Its function is as follows. Involved in the maturation of [NiFe] hydrogenases. Required for nickel insertion into the metal center of the hydrogenase. This Rippkaea orientalis (strain PCC 8801 / RF-1) (Cyanothece sp. (strain PCC 8801)) protein is Hydrogenase maturation factor HypA.